Here is a 181-residue protein sequence, read N- to C-terminus: Inner membrane-spanning protein YciB (181 aa).

Transmembrane regions (helical) follow at residues 22 to 42 (IYTA…ILYF), 50 to 70 (MHLV…AFHD), 72 to 92 (AFIK…LAVS), 118 to 138 (VTWY…YVAF), and 148 to 168 (FKVF…VFYI).

The protein belongs to the YciB family.

It localises to the cell inner membrane. Plays a role in cell envelope biogenesis, maintenance of cell envelope integrity and membrane homeostasis. The sequence is that of Inner membrane-spanning protein YciB from Shewanella denitrificans (strain OS217 / ATCC BAA-1090 / DSM 15013).